Reading from the N-terminus, the 229-residue chain is MVHPFLFLEFLRKMLAPLHLSEASADAVSYTWLIIALLLLLSFLATRALKTVPGGLQNFMEIIVGGIENMVTETMGEHGRPYFPLVATIGIFVLVSNLIGLIPGFFPPTANINTTAACAIVVFLSTHVVGIKRHGIGYIKHFCGPILWLTPIMFFIEVIGHLSRPVSLTLRLFGNMNGHELVLIIFFGLAPFLVPLPMMLMGVLVSFIQAFVFMLLTMIYIQGSLEEAH.

The next 6 helical transmembrane spans lie at 25-45, 86-106, 111-131, 142-162, 181-201, and 202-222; these read ADAVSYTWLIIALLLLLSFLA, VATIGIFVLVSNLIGLIPGFF, NINTTAACAIVVFLSTHVVGI, FCGPILWLTPIMFFIEVIGHL, LVLIIFFGLAPFLVPLPMMLM, and GVLVSFIQAFVFMLLTMIYIQ.

Belongs to the ATPase A chain family. F-type ATPases have 2 components, CF(1) - the catalytic core - and CF(0) - the membrane proton channel. CF(1) has five subunits: alpha(3), beta(3), gamma(1), delta(1), epsilon(1). CF(0) has three main subunits: a(1), b(2) and c(9-12). The alpha and beta chains form an alternating ring which encloses part of the gamma chain. CF(1) is attached to CF(0) by a central stalk formed by the gamma and epsilon chains, while a peripheral stalk is formed by the delta and b chains.

It is found in the cell inner membrane. In terms of biological role, key component of the proton channel; it plays a direct role in the translocation of protons across the membrane. The protein is ATP synthase subunit a 3 of Pelobacter propionicus (strain DSM 2379 / NBRC 103807 / OttBd1).